The chain runs to 115 residues: U3-lycotoxin-Ls1a (115 aa).

A signal peptide spans Met1–Ala20. Positions Glu21–Arg44 are excised as a propeptide. 4 disulfides stabilise this stretch: Cys48–Cys63, Cys55–Cys72, Cys62–Cys87, and Cys74–Cys85.

This sequence belongs to the neurotoxin 19 (CSTX) family. 01 subfamily. In terms of tissue distribution, expressed by the venom gland.

The protein localises to the secreted. The sequence is that of U3-lycotoxin-Ls1a from Lycosa singoriensis (Wolf spider).